Here is a 596-residue protein sequence, read N- to C-terminus: uncharacterized protein (596 aa).

The helical transmembrane segment at 7–26 (FWPILLGFTVLVAAGLYYVV) threads the bilayer.

The protein resides in the membrane. This is an uncharacterized protein from Sinorhizobium fredii (strain NBRC 101917 / NGR234).